The following is a 78-amino-acid chain: RNA-binding protein Hfq (78 aa).

Positions 10–69 constitute a Sm domain; that stretch reads DPFLNALRKEHVPVSIYLVNGIKLQGHIESFDQYVVLLRNTVTQMVYKHAISTVVPARAV.

The protein belongs to the Hfq family. As to quaternary structure, homohexamer.

In terms of biological role, RNA chaperone that binds small regulatory RNA (sRNAs) and mRNAs to facilitate mRNA translational regulation in response to envelope stress, environmental stress and changes in metabolite concentrations. Also binds with high specificity to tRNAs. This is RNA-binding protein Hfq from Janthinobacterium sp. (strain Marseille) (Minibacterium massiliensis).